A 902-amino-acid chain; its full sequence is Leucine-rich repeat-containing G-protein coupled receptor 5 (902 aa).

An N-terminal signal peptide occupies residues 1 to 22 (MDTSKTSFFLFSVLCSLQLVGA). Residues 23 to 558 (ARPGKQQRSC…HLFGSWLTRT (536 aa)) lie on the Extracellular side of the membrane. Disulfide bonds link Cys-32-Cys-38 and Cys-36-Cys-49. The region spanning 32–61 (CPTPCECEQEGMLVRVDCSDRALTSLPRNL) is the LRRNT domain. 17 LRR repeats span residues 41–61 (EGML…PRNL), 62–85 (SIFT…VMHN), 86–109 (LHFL…AFAG), 111–133 (GSLK…ALHN), 134–157 (LRSL…SFNG), 159–181 (FSLR…ALES), 182–205 (LSAL…AFRN), 207–229 (SSLV…CFDG), 230–253 (LHSL…IKTL), 254–276 (KNLK…AFIG), 278–300 (PSLI…AFQH), 302–324 (PELR…LTGT), 325–347 (TSLE…VCTQ), 348–372 (LPNL…GCQR), 374–393 (QKID…TFQQ), 394–417 (LVGL…SFSS), and 418–441 (LPSL…GLHG). N-linked (GlcNAc...) asparagine glycosylation is found at Asn-60 and Asn-74. Asn-205 carries an N-linked (GlcNAc...) asparagine glycan. Residues Cys-345 and Cys-370 are joined by a disulfide bond. The cysteines at positions 476 and 537 are disulfide-linked. N-linked (GlcNAc...) asparagine glycosylation is present at Asn-496. A helical membrane pass occupies residues 559 to 579 (GVWLIVLLSFVCNALVIATVF). The Cytoplasmic portion of the chain corresponds to 580–589 (RPLSYVPSIK). Residues 590–610 (LLIGLIAIMNTLMGLSSGVLA) form a helical membrane-spanning segment. An LRR 18 repeat occupies 598–619 (MNTLMGLSSGVLATVDALTFGN). The Extracellular segment spans residues 611-634 (TVDALTFGNFAQYGAWWESGVGCQ). Cys-633 and Cys-708 are oxidised to a cystine. Residues 635–655 (ITGFLSVFAAETSIFLLTVAA) form a helical membrane-spanning segment. Topologically, residues 656-678 (LERGFSIKCTTKFETKSSFINVK) are cytoplasmic. A helical membrane pass occupies residues 679-699 (LSIVFCFLLSIVIAVSPLLSG). Residues 700-718 (STYGTSPLCFPLLFGDPSS) lie on the Extracellular side of the membrane. The chain crosses the membrane as a helical span at residues 719 to 739 (MGFMVALVLLNSLCFLVMTIA). At 740-763 (YTKLYCSLEKGELENIWDCSMVKH) the chain is on the cytoplasmic side. A helical transmembrane segment spans residues 764–784 (IALLLFTNCILYCPVAFLSFS). Residues 785–798 (SLLNLTFISPEVNK) lie on the Extracellular side of the membrane. N-linked (GlcNAc...) asparagine glycans are attached at residues Asn-788 and Asn-797. A helical membrane pass occupies residues 799–819 (SILLLIIPLPACLNPLLYILF). Residues 820–902 (NPHFKEDIGS…LSAVAFVPCH (83 aa)) are Cytoplasmic-facing.

The protein belongs to the G-protein coupled receptor 1 family.

The protein localises to the cell membrane. It is found in the golgi apparatus. It localises to the trans-Golgi network membrane. Its function is as follows. Receptor for R-spondins that potentiates the canonical Wnt signaling pathway and acts as a stem cell marker of the intestinal epithelium and the hair follicle. Upon binding to R-spondins (RSPO1, RSPO2, RSPO3 or RSPO4), associates with phosphorylated LRP6 and frizzled receptors that are activated by extracellular Wnt receptors, triggering the canonical Wnt signaling pathway to increase expression of target genes. In contrast to classical G-protein coupled receptors, does not activate heterotrimeric G-proteins to transduce the signal. Involved in the development and/or maintenance of the adult intestinal stem cells during postembryonic development. The polypeptide is Leucine-rich repeat-containing G-protein coupled receptor 5 (lgr5) (Xenopus tropicalis (Western clawed frog)).